Here is a 135-residue protein sequence, read N- to C-terminus: Large ribosomal subunit protein uL16 (135 aa).

The protein belongs to the universal ribosomal protein uL16 family. As to quaternary structure, part of the 50S ribosomal subunit.

In terms of biological role, binds 23S rRNA and is also seen to make contacts with the A and possibly P site tRNAs. The sequence is that of Large ribosomal subunit protein uL16 from Bdellovibrio bacteriovorus (strain ATCC 15356 / DSM 50701 / NCIMB 9529 / HD100).